We begin with the raw amino-acid sequence, 270 residues long: 4-hydroxy-tetrahydrodipicolinate reductase (270 aa).

Residues 11-16 (GAGGRM) and E37 contribute to the NAD(+) site. R38 is a binding site for NADP(+). Residues 101–103 (GTT) and 125–128 (APNM) each bind NAD(+). Catalysis depends on H158, which acts as the Proton donor/acceptor. Residue H159 participates in (S)-2,3,4,5-tetrahydrodipicolinate binding. The Proton donor role is filled by K162. Residue 168–169 (GT) coordinates (S)-2,3,4,5-tetrahydrodipicolinate.

This sequence belongs to the DapB family.

The protein localises to the cytoplasm. It catalyses the reaction (S)-2,3,4,5-tetrahydrodipicolinate + NAD(+) + H2O = (2S,4S)-4-hydroxy-2,3,4,5-tetrahydrodipicolinate + NADH + H(+). The enzyme catalyses (S)-2,3,4,5-tetrahydrodipicolinate + NADP(+) + H2O = (2S,4S)-4-hydroxy-2,3,4,5-tetrahydrodipicolinate + NADPH + H(+). The protein operates within amino-acid biosynthesis; L-lysine biosynthesis via DAP pathway; (S)-tetrahydrodipicolinate from L-aspartate: step 4/4. In terms of biological role, catalyzes the conversion of 4-hydroxy-tetrahydrodipicolinate (HTPA) to tetrahydrodipicolinate. This chain is 4-hydroxy-tetrahydrodipicolinate reductase, found in Shewanella baltica (strain OS223).